The sequence spans 346 residues: N-acetyl-gamma-glutamyl-phosphate reductase (346 aa).

Residue cysteine 149 is part of the active site.

This sequence belongs to the NAGSA dehydrogenase family. Type 1 subfamily.

It is found in the cytoplasm. It catalyses the reaction N-acetyl-L-glutamate 5-semialdehyde + phosphate + NADP(+) = N-acetyl-L-glutamyl 5-phosphate + NADPH + H(+). It participates in amino-acid biosynthesis; L-arginine biosynthesis; N(2)-acetyl-L-ornithine from L-glutamate: step 3/4. Functionally, catalyzes the NADPH-dependent reduction of N-acetyl-5-glutamyl phosphate to yield N-acetyl-L-glutamate 5-semialdehyde. The chain is N-acetyl-gamma-glutamyl-phosphate reductase from Geotalea daltonii (strain DSM 22248 / JCM 15807 / FRC-32) (Geobacter daltonii).